Here is a 139-residue protein sequence, read N- to C-terminus: D-ribose pyranase (139 aa).

The Proton donor role is filled by histidine 20. Residues aspartate 28, histidine 106, and 128 to 130 (YAN) each bind substrate.

It belongs to the RbsD / FucU family. RbsD subfamily. Homodecamer.

Its subcellular location is the cytoplasm. The catalysed reaction is beta-D-ribopyranose = beta-D-ribofuranose. Its pathway is carbohydrate metabolism; D-ribose degradation; D-ribose 5-phosphate from beta-D-ribopyranose: step 1/2. Functionally, catalyzes the interconversion of beta-pyran and beta-furan forms of D-ribose. This is D-ribose pyranase from Actinobacillus succinogenes (strain ATCC 55618 / DSM 22257 / CCUG 43843 / 130Z).